We begin with the raw amino-acid sequence, 245 residues long: 1-(5-phosphoribosyl)-5-[(5-phosphoribosylamino)methylideneamino] imidazole-4-carboxamide isomerase (245 aa).

Aspartate 7 acts as the Proton acceptor in catalysis. Residue aspartate 129 is the Proton donor of the active site.

The protein belongs to the HisA/HisF family.

The protein localises to the cytoplasm. The catalysed reaction is 1-(5-phospho-beta-D-ribosyl)-5-[(5-phospho-beta-D-ribosylamino)methylideneamino]imidazole-4-carboxamide = 5-[(5-phospho-1-deoxy-D-ribulos-1-ylimino)methylamino]-1-(5-phospho-beta-D-ribosyl)imidazole-4-carboxamide. It participates in amino-acid biosynthesis; L-histidine biosynthesis; L-histidine from 5-phospho-alpha-D-ribose 1-diphosphate: step 4/9. This is 1-(5-phosphoribosyl)-5-[(5-phosphoribosylamino)methylideneamino] imidazole-4-carboxamide isomerase from Escherichia coli O17:K52:H18 (strain UMN026 / ExPEC).